A 259-amino-acid chain; its full sequence is MNIDPVALKIGLLEIRWYSLAYIIGILFAYWYVQKIDKYKVFTPESYKSIISWWVTGMILGGRIGYILFYNLNFYMSFPIEMFKLWKGGMSFHGASLGLFCTMYIFCKKYKIKFLSAIDLCLCAVPVGIFLGRIANFINGELYGKVTNTRFGMIFQNSGDFFYRHPSQLYEAFFEGLLLFVVMNLLFFFTKVKSYQGMLFSIFMIWYGIVRFFIEFVREPDVQVGYILFNWITMGQLLSFIMVILGICILRLSRMSHNI.

A run of 4 helical transmembrane segments spans residues 10-30 (IGLL…LFAY), 50-70 (IISW…ILFY), 86-106 (WKGG…MYIF), and 112-132 (IKFL…IFLG). Arg133 is a binding site for a 1,2-diacyl-sn-glycero-3-phospho-(1'-sn-glycerol). The next 3 membrane-spanning stretches (helical) occupy residues 169-189 (LYEA…LFFF), 197-217 (GMLF…IEFV), and 227-247 (ILFN…ILGI).

The protein belongs to the Lgt family.

It localises to the cell inner membrane. It carries out the reaction L-cysteinyl-[prolipoprotein] + a 1,2-diacyl-sn-glycero-3-phospho-(1'-sn-glycerol) = an S-1,2-diacyl-sn-glyceryl-L-cysteinyl-[prolipoprotein] + sn-glycerol 1-phosphate + H(+). It functions in the pathway protein modification; lipoprotein biosynthesis (diacylglyceryl transfer). Its function is as follows. Catalyzes the transfer of the diacylglyceryl group from phosphatidylglycerol to the sulfhydryl group of the N-terminal cysteine of a prolipoprotein, the first step in the formation of mature lipoproteins. The sequence is that of Phosphatidylglycerol--prolipoprotein diacylglyceryl transferase from Ehrlichia ruminantium (strain Welgevonden).